Here is a 1724-residue protein sequence, read N- to C-terminus: Sperm flagellar protein 2 (1724 aa).

In terms of domain architecture, Calponin-homology (CH) spans 1–105 (MSEILCQWLN…LLYQLYIALQ (105 aa)). Coiled coils occupy residues 170 to 203 (KAIE…KDLQ) and 255 to 351 (RRLL…REKE). Residues 545-576 (HERQKSGKTPPTQEDDKRDPVVNQEKVSKTQD) form a disordered region. A compositionally biased stretch (basic and acidic residues) spans 558–576 (EDDKRDPVVNQEKVSKTQD). Residues 665–691 (NQAKLLEEALTGYKRKFLQLKKKKEQM) adopt a coiled-coil conformation. The tract at residues 828–910 (EEKETEKKAG…PTAPPPPKAG (83 aa)) is disordered. A compositionally biased stretch (basic and acidic residues) spans 853-862 (EAEKDKELHQ). Positions 995–1021 (EDLWEDEETKAELHQRVNDLRDRLWDI) form a coiled coil. Over residues 1177–1194 (RLTEEEKEPPQLDSKEKS) the composition is skewed to basic and acidic residues. 3 disordered regions span residues 1177 to 1241 (RLTE…EMAE), 1580 to 1618 (VSPI…NANT), and 1704 to 1724 (SEHA…DEKK). Residues 1210-1221 (PKKKKTDKKGKG) show a composition bias toward basic residues. The segment at 1228–1580 (EVSPVTVTPE…MAEKTSISTV (353 aa)) is interaction with IFT20. Positions 1592-1607 (SSAKEDRELKEEKDDQ) are enriched in basic and acidic residues.

In terms of assembly, interacts (via C-terminus) with IFT20. Interacts with DYNC1I2. Highly expressed in testis, where it primarily localizes to late spermatocytes, round spermatids and elongating spermatids (at protein level). Found in Sertoli cells of the testis (at protein level). Expressed at lower levels in epididymis (at protein level). Detected in lung, brain, liver and kidney. Also detected in bone, cartilage, trachea, pituitary gland and eye. Expressed in osteoblasts and chondrocytes.

The protein localises to the cell projection. It localises to the cilium. Its subcellular location is the flagellum. It is found in the cytoplasm. The protein resides in the cytoskeleton. The protein localises to the golgi apparatus. In terms of biological role, required for correct axoneme development in spermatozoa. Important for normal development of the manchette and sperm head morphology. Essential for male fertility. Plays a role in localization of the intraflagellar transport protein IFT20 to the manchette, suggesting function as an adapter for dynein-mediated protein transport during spermatogenesis. Also plays a role in bone growth where it seems to be required for normal osteoblast differentiation. In Mus musculus (Mouse), this protein is Sperm flagellar protein 2 (Spef2).